Consider the following 477-residue polypeptide: Methylenetetrahydrofolate--tRNA-(uracil-5-)-methyltransferase TrmFO (477 aa).

14–19 serves as a coordination point for FAD; the sequence is GGGLAG.

The protein belongs to the MnmG family. TrmFO subfamily. FAD serves as cofactor.

The protein resides in the cytoplasm. It carries out the reaction uridine(54) in tRNA + (6R)-5,10-methylene-5,6,7,8-tetrahydrofolate + NADH + H(+) = 5-methyluridine(54) in tRNA + (6S)-5,6,7,8-tetrahydrofolate + NAD(+). The catalysed reaction is uridine(54) in tRNA + (6R)-5,10-methylene-5,6,7,8-tetrahydrofolate + NADPH + H(+) = 5-methyluridine(54) in tRNA + (6S)-5,6,7,8-tetrahydrofolate + NADP(+). Catalyzes the folate-dependent formation of 5-methyl-uridine at position 54 (M-5-U54) in all tRNAs. This is Methylenetetrahydrofolate--tRNA-(uracil-5-)-methyltransferase TrmFO from Rhizobium johnstonii (strain DSM 114642 / LMG 32736 / 3841) (Rhizobium leguminosarum bv. viciae).